The primary structure comprises 305 residues: MLRITFLGTGGSLPTRNRNPSAVMINREGELMLFDCGEGTQQQMMRAKTGMMSLSSIFVSHFHADHFLGIPGLIQTMSFMGRKDPLMIYGPAGTREFTELFKALGYFNLKYEIHGMELKPGDVVEGEGYVVRALETEHSTPSLGYALIENPRPGRFNREKAVALGVPPGPLFSKLQKGNPVEAGGKVVRPEEVMGTPRPGRTIVYSGDTRPCEAVLEASRDADLLIHDGSFADEMAEWAEESMHSTAGEVAALAKEAGVRKLVLTHISSRYTDDVEPILKDSKKVFENVIVAEDLMELEIPYRPE.

Zn(2+) is bound by residues histidine 61, histidine 63, aspartate 65, histidine 66, histidine 138, aspartate 208, and histidine 266. Catalysis depends on aspartate 65, which acts as the Proton acceptor.

Belongs to the RNase Z family. In terms of assembly, homodimer. Zn(2+) serves as cofactor.

The enzyme catalyses Endonucleolytic cleavage of RNA, removing extra 3' nucleotides from tRNA precursor, generating 3' termini of tRNAs. A 3'-hydroxy group is left at the tRNA terminus and a 5'-phosphoryl group is left at the trailer molecule.. Zinc phosphodiesterase, which displays some tRNA 3'-processing endonuclease activity. Probably involved in tRNA maturation, by removing a 3'-trailer from precursor tRNA. This Methanosarcina acetivorans (strain ATCC 35395 / DSM 2834 / JCM 12185 / C2A) protein is Ribonuclease Z.